The chain runs to 695 residues: ATP-dependent DNA helicase II subunit 2 (695 aa).

Residues 229 to 461 enclose the Ku domain; the sequence is FSIGNRDSKD…IDFAVSNYID (233 aa).

This sequence belongs to the ku80 family. As to quaternary structure, heterodimer of pku70 and pku80.

It is found in the nucleus. The protein resides in the chromosome. The protein localises to the telomere. It carries out the reaction ATP + H2O = ADP + phosphate + H(+). Functionally, single-stranded DNA-dependent ATP-dependent helicase. Involved in non-homologous end joining (NHEJ) DNA double strand break repair. DNA-binding is sequence-independent but has a high affinity to nicks in double-stranded DNA and to the ends of duplex DNA. Binds to naturally occurring chromosomal ends, and therefore provides chromosomal end protection. Required also for telomere recombination to repair telomeric ends in the absence of telomerase. ku70, of the ku70/ku80 heterodimer, binds to the stem loop of tlc1, the RNA component of telomerase. Involved in telomere maintenance. Interacts with telomeric repeats and subtelomeric sequences thereby controlling telomere length and protecting against subtelomeric rearrangement. Required for mating-type switching. The chain is ATP-dependent DNA helicase II subunit 2 (pku80) from Schizosaccharomyces pombe (strain 972 / ATCC 24843) (Fission yeast).